A 102-amino-acid chain; its full sequence is Large ribosomal subunit protein uL24 (102 aa).

The protein belongs to the universal ribosomal protein uL24 family. As to quaternary structure, part of the 50S ribosomal subunit.

One of two assembly initiator proteins, it binds directly to the 5'-end of the 23S rRNA, where it nucleates assembly of the 50S subunit. Its function is as follows. One of the proteins that surrounds the polypeptide exit tunnel on the outside of the subunit. The protein is Large ribosomal subunit protein uL24 of Agrobacterium fabrum (strain C58 / ATCC 33970) (Agrobacterium tumefaciens (strain C58)).